A 539-amino-acid polypeptide reads, in one-letter code: Probable protein kinase UbiB (539 aa).

Residues 23-43 traverse the membrane as a helical segment; it reads DLLFALPLPWWMLALRFVLPW. Positions 125-492 constitute a Protein kinase domain; that stretch reads RFDEKPLASA…WHDRKDEPVL (368 aa). ATP is bound by residues 131-139 and lysine 153; that span reads LASASVAQV. Aspartate 288 functions as the Proton acceptor in the catalytic mechanism. Transmembrane regions (helical) follow at residues 494-514 and 517-537; these read LIGAALLVGGAIQGWVMSEAA and LLTLTAWPAAIMLIAGLYLIV.

Belongs to the ABC1 family. UbiB subfamily.

The protein resides in the cell inner membrane. Its pathway is cofactor biosynthesis; ubiquinone biosynthesis [regulation]. Functionally, is probably a protein kinase regulator of UbiI activity which is involved in aerobic coenzyme Q (ubiquinone) biosynthesis. The polypeptide is Probable protein kinase UbiB (Pseudomonas syringae pv. syringae (strain B728a)).